Reading from the N-terminus, the 645-residue chain is MSTVNKKPASLKYKIGKVKQIPTVVKDDKTGLEYIQVQSRENEKVYGVTKFLNNYREEEKLGQGTFGEVFKGIHLGTNRKVAIKRILVRAEKDLFPITAQREITILKRMNHKNIVKLIEIVYDESPTPKTDSTSPRPVGNYHGNNTANQQKLITGKHFFMILPYMVSDLTGLLHNPRVEFGMADVKNIMLQLLEGINYIHCNKFLHRDIKTANILIDHKGVVKIADFGLARNYYGSPPNLKYPGGAGSGAKYTSVVVTRWYRAPEIVLGDRHYTTAVDIWGIGCVFAEFFEKKPILQGQTDIDQGHVIFKLMGTPSMDEWGLAYHLPGSELTKTNYKSTLQERFSKALNETGLDLLSKLLALDPYKRVTAMKAKKHPFFFEEPLPNAQLTLPNEECHESDIKRYKSEMNESMSQRPPSAPTGHTSTDNSIRAVTGAAFPKEASIPKAPRPEHIKSTIPAQPSASRYNGAATQNIPKEPIPTAPLPKGPKNSIPTGPNKLPPNPRDSYASKYPAESRFGVNTRITTESYNAGKRYRNRGGWETGRDSLNYNNNYAPPADRSHHPTIQRPSAPRGGSYPNRYQNQDYNTSRNTGYNQYSQAGDRRSYRPGASENPGTIGHGSSQSTQKDSKSSHSNNVKPKDVADYY.

The region spanning 55-379 (YREEEKLGQG…AMKAKKHPFF (325 aa)) is the Protein kinase domain. ATP-binding positions include 61–69 (LGQGTFGEV) and lysine 84. Aspartate 208 serves as the catalytic Proton acceptor. Disordered regions lie at residues 407 to 428 (EMNESMSQRPPSAPTGHTSTDN), 442 to 513 (ASIP…KYPA), and 533 to 645 (RYRN…ADYY). Polar residues-rich tracts occupy residues 409–428 (NESMSQRPPSAPTGHTSTDN) and 457–474 (IPAQPSASRYNGAATQNI). Residues 477–486 (EPIPTAPLPK) are compositionally biased toward pro residues. Polar residues predominate over residues 578 to 598 (NRYQNQDYNTSRNTGYNQYSQ).

This sequence belongs to the protein kinase superfamily. CMGC Ser/Thr protein kinase family. CDC2/CDKX subfamily.

It is found in the nucleus. The catalysed reaction is L-seryl-[protein] + ATP = O-phospho-L-seryl-[protein] + ADP + H(+). It catalyses the reaction L-threonyl-[protein] + ATP = O-phospho-L-threonyl-[protein] + ADP + H(+). It carries out the reaction [DNA-directed RNA polymerase] + ATP = phospho-[DNA-directed RNA polymerase] + ADP + H(+). Functionally, serine/threonine-protein kinase involved in transcription regulation. Phosphorylates the UBC2/RAD6 ubiquitin-conjugating enzyme (E2), leading to monoubiquitination of histone H2B and the silencing of telomeric-associated genes. Also required for histone H3 methylation. Necessary for the recovery from pheromone-induced growth arrest in the cell cycle G1 phase. This Kluyveromyces lactis (strain ATCC 8585 / CBS 2359 / DSM 70799 / NBRC 1267 / NRRL Y-1140 / WM37) (Yeast) protein is Serine/threonine-protein kinase BUR1 (BUR1).